The following is a 347-amino-acid chain: Melanoma-associated antigen B1 (347 aa).

Residues 1 to 17 are compositionally biased toward basic residues; it reads MPRGQKSKLRAREKRRK. The tract at residues 1–104 is disordered; sequence MPRGQKSKLR…QATTSTESSV (104 aa). Polar residues-rich tracts occupy residues 39–53 and 89–102; these read PSSSPVLGDTPTSSP and ENASFSQATTSTES. The MAGE domain occupies 108 to 307; the sequence is VAWEAGMLMH…RDFPSHYEEA (200 aa). Residues 315–347 form a disordered region; sequence AQVRSSVRARRRTTATTFRARSRAPFSRSSHPM. Low complexity predominate over residues 328 to 347; that stretch reads TATTFRARSRAPFSRSSHPM.

As to expression, expressed only in testis.

The polypeptide is Melanoma-associated antigen B1 (MAGEB1) (Homo sapiens (Human)).